The following is a 493-amino-acid chain: MTALNELTLAEARDGLKAKDFSAREIAQAHLDAIERAKALNAYIVATPDRALKMADVSDEKIAKGEARPLEGLPLGIKDLFATQGVHTTAGSKILEGFEPHYESNVSSQLWRDGAVMLGKLNLDEFAMGSSNETSAYGKTISPWRRQGSDTPLVPGGSSGGSAAAVAAHLCLGATATDTGGSIRQPAAFTGTVGIKPTYGRCSRWGIIAYASSLDQAGPIARTVQDCAILLGSMAGHDPRDTTSVDVPVPDFEAAITRGVKGLTIGIPKEYRVEGMPAEIQRLWDQGADWLREAGATVREISLPHTQYALPAYYIVAPAEASSNLARYDGVRYGLRVPGRDIAGMYENTRAAGFGREVKRRIMIGTYVLSAGYYDAYYVRAQKIRTLIKRDFEAAYASGIDAILTPATPSAAFGIGEMASADPVEMYLNDVFTVTVNMAGLPGISVPAGLDAQGLPLGLQLIGRPFDEETLFAAAQTIENAAGRISLPKAWWA.

Residues Lys78 and Ser158 each act as charge relay system in the active site. Catalysis depends on Ser182, which acts as the Acyl-ester intermediate.

It belongs to the amidase family. GatA subfamily. Heterotrimer of A, B and C subunits.

It catalyses the reaction L-glutamyl-tRNA(Gln) + L-glutamine + ATP + H2O = L-glutaminyl-tRNA(Gln) + L-glutamate + ADP + phosphate + H(+). Allows the formation of correctly charged Gln-tRNA(Gln) through the transamidation of misacylated Glu-tRNA(Gln) in organisms which lack glutaminyl-tRNA synthetase. The reaction takes place in the presence of glutamine and ATP through an activated gamma-phospho-Glu-tRNA(Gln). The protein is Glutamyl-tRNA(Gln) amidotransferase subunit A of Methylorubrum populi (strain ATCC BAA-705 / NCIMB 13946 / BJ001) (Methylobacterium populi).